The chain runs to 308 residues: Bifunctional protein FolD (308 aa).

Residues 171-173, Ser198, and Ile239 each bind NADP(+); that span reads GRS.

Belongs to the tetrahydrofolate dehydrogenase/cyclohydrolase family. In terms of assembly, homodimer.

It carries out the reaction (6R)-5,10-methylene-5,6,7,8-tetrahydrofolate + NADP(+) = (6R)-5,10-methenyltetrahydrofolate + NADPH. It catalyses the reaction (6R)-5,10-methenyltetrahydrofolate + H2O = (6R)-10-formyltetrahydrofolate + H(+). The protein operates within one-carbon metabolism; tetrahydrofolate interconversion. Its function is as follows. Catalyzes the oxidation of 5,10-methylenetetrahydrofolate to 5,10-methenyltetrahydrofolate and then the hydrolysis of 5,10-methenyltetrahydrofolate to 10-formyltetrahydrofolate. The polypeptide is Bifunctional protein FolD (Borreliella burgdorferi (strain ATCC 35210 / DSM 4680 / CIP 102532 / B31) (Borrelia burgdorferi)).